The following is a 657-amino-acid chain: Methionine--tRNA ligase (657 aa).

The 'HIGH' region motif lies at 13 to 23 (YYPSGNLHIGH). The 'KMSKS' region signature appears at 308–312 (KMSKS). An ATP-binding site is contributed by K311. In terms of domain architecture, tRNA-binding spans 557-657 (DFDKVEIKAA…SAIPNGAVIK (101 aa)).

It belongs to the class-I aminoacyl-tRNA synthetase family. MetG type 2B subfamily. Homodimer.

Its subcellular location is the cytoplasm. It carries out the reaction tRNA(Met) + L-methionine + ATP = L-methionyl-tRNA(Met) + AMP + diphosphate. Functionally, is required not only for elongation of protein synthesis but also for the initiation of all mRNA translation through initiator tRNA(fMet) aminoacylation. This chain is Methionine--tRNA ligase, found in Staphylococcus aureus (strain MW2).